We begin with the raw amino-acid sequence, 698 residues long: Pentatricopeptide repeat-containing protein 1, mitochondrial (698 aa).

The tract at residues 49 to 88 is disordered; sequence SSSQLPLGQERQENTGSLGSDPSHSNSTATQEEDEEESFG. A compositionally biased stretch (polar residues) spans 62-78; that stretch reads NTGSLGSDPSHSNSTAT. PPR repeat units lie at residues 133–169, 170–204, 205–243, 244–278, 279–315, and 316–352; these read TPYW…RLQP, MESN…DLEP, SDAT…NFEL, NLKT…GHVV, TEET…GLQP, and SRDS…ATVL. Residues 392–419 are disordered; it reads QALGPPEPPEARVPSKAQPEVDTKAEPS. 3 PPR repeats span residues 517-551, 552-583, and 584-618; these read DLTF…GLVP, NLQT…QVTP, and NSHI…RVPV. Residues 670–698 are disordered; that stretch reads HPWQKFRTKPQEDQDTRKEADDGCALGGR. The segment covering 678 to 690 has biased composition (basic and acidic residues); it reads KPQEDQDTRKEAD.

The protein belongs to the PTCD1 family. In terms of assembly, associates with mitochondrial leucine tRNAs. Interacts with ELAC2.

The protein resides in the mitochondrion. The protein localises to the mitochondrion matrix. In terms of biological role, mitochondrial protein implicated in negative regulation of leucine tRNA levels, as well as negative regulation of mitochondria-encoded proteins and COX activity. Also affects the 3'-processing of mitochondrial tRNAs. The polypeptide is Pentatricopeptide repeat-containing protein 1, mitochondrial (PTCD1) (Pongo abelii (Sumatran orangutan)).